The primary structure comprises 158 residues: GTP-dependent dephospho-CoA kinase (158 aa).

The GTP site is built by Asp35, Ile36, Val37, Asp54, Lys56, Glu109, and Asp132.

Belongs to the GTP-dependent DPCK family.

It carries out the reaction 3'-dephospho-CoA + GTP = GDP + CoA + H(+). It participates in cofactor biosynthesis; coenzyme A biosynthesis. Functionally, catalyzes the GTP-dependent phosphorylation of the 3'-hydroxyl group of dephosphocoenzyme A to form coenzyme A (CoA). In Methanocaldococcus jannaschii (strain ATCC 43067 / DSM 2661 / JAL-1 / JCM 10045 / NBRC 100440) (Methanococcus jannaschii), this protein is GTP-dependent dephospho-CoA kinase.